Reading from the N-terminus, the 235-residue chain is Urease accessory protein UreF (235 aa).

The protein belongs to the UreF family. In terms of assembly, ureD, UreF and UreG form a complex that acts as a GTP-hydrolysis-dependent molecular chaperone, activating the urease apoprotein by helping to assemble the nickel containing metallocenter of UreC. The UreE protein probably delivers the nickel.

Its subcellular location is the cytoplasm. Required for maturation of urease via the functional incorporation of the urease nickel metallocenter. The chain is Urease accessory protein UreF from Ureaplasma parvum serovar 3 (strain ATCC 27815 / 27 / NCTC 11736).